A 154-amino-acid polypeptide reads, in one-letter code: Endoribonuclease YbeY (154 aa).

Histidine 114, histidine 118, and histidine 124 together coordinate Zn(2+).

The protein belongs to the endoribonuclease YbeY family. It depends on Zn(2+) as a cofactor.

Its subcellular location is the cytoplasm. Single strand-specific metallo-endoribonuclease involved in late-stage 70S ribosome quality control and in maturation of the 3' terminus of the 16S rRNA. The sequence is that of Endoribonuclease YbeY from Marinomonas sp. (strain MWYL1).